The following is a 74-amino-acid chain: Brevinin-2Ta (74 aa).

A signal peptide spans 1–22 (MFTMKKSLLLFFFLGTISLSLC). Residues 23 to 41 (QEERNADEDDGEMTEEEKR) constitute a propeptide that is removed on maturation. Cysteine 68 and cysteine 74 are oxidised to a cystine.

This sequence belongs to the frog skin active peptide (FSAP) family. Brevinin subfamily. In terms of tissue distribution, expressed by the skin glands.

It localises to the secreted. Its function is as follows. Antimicrobial peptide. The sequence is that of Brevinin-2Ta from Rana temporaria (European common frog).